The primary structure comprises 248 residues: MIKIGIYGAKGRMGKQIEECLKSETQAEISILYNKGGNLEELFEKSDVIIDFSSPSGTHELLNYARTMPKPLTIGTTGLDEKILHLMQSASKVMPIFYATNMSLGVAVLNYLASKASQMLRNFDIEILEMHHRHKKDAPSGTAMTLAQSVAKARNLELEKVRVSGRDGIIGERSKDEIAVMSLRGGDIVGRHTVGFYEDGEFLELNHTATSRATFAKGAIKIAIWLSKQEAKMYSINDFFRNLKCVQL.

NAD(+) is bound by residues 8-13, 75-77, and 99-102; these read GAKGRM, GTT, and ATNM. Catalysis depends on H131, which acts as the Proton donor/acceptor. Residue H132 coordinates (S)-2,3,4,5-tetrahydrodipicolinate. The active-site Proton donor is K135. 141 to 142 is a binding site for (S)-2,3,4,5-tetrahydrodipicolinate; the sequence is GT.

It belongs to the DapB family.

It is found in the cytoplasm. It catalyses the reaction (S)-2,3,4,5-tetrahydrodipicolinate + NAD(+) + H2O = (2S,4S)-4-hydroxy-2,3,4,5-tetrahydrodipicolinate + NADH + H(+). It carries out the reaction (S)-2,3,4,5-tetrahydrodipicolinate + NADP(+) + H2O = (2S,4S)-4-hydroxy-2,3,4,5-tetrahydrodipicolinate + NADPH + H(+). It functions in the pathway amino-acid biosynthesis; L-lysine biosynthesis via DAP pathway; (S)-tetrahydrodipicolinate from L-aspartate: step 4/4. Catalyzes the conversion of 4-hydroxy-tetrahydrodipicolinate (HTPA) to tetrahydrodipicolinate. The protein is 4-hydroxy-tetrahydrodipicolinate reductase of Campylobacter jejuni subsp. doylei (strain ATCC BAA-1458 / RM4099 / 269.97).